Reading from the N-terminus, the 129-residue chain is UPF0325 protein YE3288 (129 aa).

The protein belongs to the UPF0325 family.

In Yersinia enterocolitica serotype O:8 / biotype 1B (strain NCTC 13174 / 8081), this protein is UPF0325 protein YE3288.